A 400-amino-acid chain; its full sequence is NADH-quinone oxidoreductase subunit D (400 aa).

This sequence belongs to the complex I 49 kDa subunit family. NDH-1 is composed of 14 different subunits. Subunits NuoB, C, D, E, F, and G constitute the peripheral sector of the complex.

The protein localises to the cell inner membrane. The catalysed reaction is a quinone + NADH + 5 H(+)(in) = a quinol + NAD(+) + 4 H(+)(out). In terms of biological role, NDH-1 shuttles electrons from NADH, via FMN and iron-sulfur (Fe-S) centers, to quinones in the respiratory chain. The immediate electron acceptor for the enzyme in this species is believed to be a menaquinone. Couples the redox reaction to proton translocation (for every two electrons transferred, four hydrogen ions are translocated across the cytoplasmic membrane), and thus conserves the redox energy in a proton gradient. In Chlorobaculum parvum (strain DSM 263 / NCIMB 8327) (Chlorobium vibrioforme subsp. thiosulfatophilum), this protein is NADH-quinone oxidoreductase subunit D.